Here is a 292-residue protein sequence, read N- to C-terminus: 33 kDa chaperonin (292 aa).

2 disulfide bridges follow: cysteine 238–cysteine 240 and cysteine 271–cysteine 274.

The protein belongs to the HSP33 family. Post-translationally, under oxidizing conditions two disulfide bonds are formed involving the reactive cysteines. Under reducing conditions zinc is bound to the reactive cysteines and the protein is inactive.

The protein localises to the cytoplasm. Redox regulated molecular chaperone. Protects both thermally unfolding and oxidatively damaged proteins from irreversible aggregation. Plays an important role in the bacterial defense system toward oxidative stress. This chain is 33 kDa chaperonin, found in Alkaliphilus metalliredigens (strain QYMF).